The following is a 303-amino-acid chain: Methionyl-tRNA formyltransferase (303 aa).

S111–P114 serves as a coordination point for (6S)-5,6,7,8-tetrahydrofolate.

It belongs to the Fmt family.

The enzyme catalyses L-methionyl-tRNA(fMet) + (6R)-10-formyltetrahydrofolate = N-formyl-L-methionyl-tRNA(fMet) + (6S)-5,6,7,8-tetrahydrofolate + H(+). Functionally, attaches a formyl group to the free amino group of methionyl-tRNA(fMet). The formyl group appears to play a dual role in the initiator identity of N-formylmethionyl-tRNA by promoting its recognition by IF2 and preventing the misappropriation of this tRNA by the elongation apparatus. The sequence is that of Methionyl-tRNA formyltransferase from Ehrlichia chaffeensis (strain ATCC CRL-10679 / Arkansas).